The primary structure comprises 438 residues: Histidinol dehydrogenase (438 aa).

The NAD(+) site is built by Tyr-129, Gln-193, and Asn-216. Substrate is bound by residues Thr-239, Gln-261, and His-264. Gln-261 and His-264 together coordinate Zn(2+). Active-site proton acceptor residues include Glu-330 and His-331. Positions 331, 364, 418, and 423 each coordinate substrate. A Zn(2+)-binding site is contributed by Asp-364. Position 423 (His-423) interacts with Zn(2+).

It belongs to the histidinol dehydrogenase family. The cofactor is Zn(2+).

The catalysed reaction is L-histidinol + 2 NAD(+) + H2O = L-histidine + 2 NADH + 3 H(+). Its pathway is amino-acid biosynthesis; L-histidine biosynthesis; L-histidine from 5-phospho-alpha-D-ribose 1-diphosphate: step 9/9. Its function is as follows. Catalyzes the sequential NAD-dependent oxidations of L-histidinol to L-histidinaldehyde and then to L-histidine. The protein is Histidinol dehydrogenase of Thermobifida fusca (strain YX).